The primary structure comprises 256 residues: Thiazole synthase (256 aa).

Lysine 97 functions as the Schiff-base intermediate with DXP in the catalytic mechanism. 1-deoxy-D-xylulose 5-phosphate contacts are provided by residues glycine 158, alanine 184 to glycine 185, and asparagine 206 to threonine 207.

The protein belongs to the ThiG family. Homotetramer. Forms heterodimers with either ThiH or ThiS.

The protein resides in the cytoplasm. The enzyme catalyses [ThiS sulfur-carrier protein]-C-terminal-Gly-aminoethanethioate + 2-iminoacetate + 1-deoxy-D-xylulose 5-phosphate = [ThiS sulfur-carrier protein]-C-terminal Gly-Gly + 2-[(2R,5Z)-2-carboxy-4-methylthiazol-5(2H)-ylidene]ethyl phosphate + 2 H2O + H(+). The protein operates within cofactor biosynthesis; thiamine diphosphate biosynthesis. Functionally, catalyzes the rearrangement of 1-deoxy-D-xylulose 5-phosphate (DXP) to produce the thiazole phosphate moiety of thiamine. Sulfur is provided by the thiocarboxylate moiety of the carrier protein ThiS. In vitro, sulfur can be provided by H(2)S. The sequence is that of Thiazole synthase from Flavobacterium psychrophilum (strain ATCC 49511 / DSM 21280 / CIP 103535 / JIP02/86).